The following is a 630-amino-acid chain: tRNA uridine 5-carboxymethylaminomethyl modification enzyme MnmG (630 aa).

FAD is bound at residue 15–20 (GAGHAG). 274–288 (GPRYCPSIEDKIVRF) is an NAD(+) binding site.

It belongs to the MnmG family. Homodimer. Heterotetramer of two MnmE and two MnmG subunits. FAD serves as cofactor.

The protein localises to the cytoplasm. Its function is as follows. NAD-binding protein involved in the addition of a carboxymethylaminomethyl (cmnm) group at the wobble position (U34) of certain tRNAs, forming tRNA-cmnm(5)s(2)U34. The sequence is that of tRNA uridine 5-carboxymethylaminomethyl modification enzyme MnmG from Alkaliphilus oremlandii (strain OhILAs) (Clostridium oremlandii (strain OhILAs)).